A 134-amino-acid chain; its full sequence is ATP synthase epsilon chain (134 aa).

The protein belongs to the ATPase epsilon chain family. In terms of assembly, F-type ATPases have 2 components, CF(1) - the catalytic core - and CF(0) - the membrane proton channel. CF(1) has five subunits: alpha(3), beta(3), gamma(1), delta(1), epsilon(1). CF(0) has three main subunits: a, b and c.

It localises to the cell membrane. Produces ATP from ADP in the presence of a proton gradient across the membrane. The sequence is that of ATP synthase epsilon chain from Listeria innocua serovar 6a (strain ATCC BAA-680 / CLIP 11262).